The sequence spans 151 residues: MMMGMKFFSFYVVLLLVAASSGMRINGQSVSCLNQLAPCLNYLNGTKEVPQVCCNPLKSVIRNNPECLCRMISNRWSSQAERAGIDVNDAQMLPARCGEHVNPIACLTRSRGGSTNSDRSSSIGNTFSQSYWMTTLAIAATVLSYCHHIIS.

An N-terminal signal peptide occupies residues 1-22 (MMMGMKFFSFYVVLLLVAASSG). Cystine bridges form between Cys32–Cys69, Cys39–Cys53, Cys54–Cys97, and Cys67–Cys106. Asn44 is a glycosylation site (N-linked (GlcNAc...) asparagine). Residue Ser120 is the site of GPI-anchor amidated serine attachment. The propeptide at 121–151 (SSIGNTFSQSYWMTTLAIAATVLSYCHHIIS) is removed in mature form.

Belongs to the plant LTP family. In terms of tissue distribution, expressed in vascular tissues of all organs. Expressed in seedlings, preferentially in hypocotyls and roots. Also observed in siliques.

It is found in the cell membrane. Its function is as follows. Lipid transfer protein that promotes the number of phloem (pro)cambial and pericycle cells. In Arabidopsis thaliana (Mouse-ear cress), this protein is Non-specific lipid transfer protein GPI-anchored 30.